A 270-amino-acid chain; its full sequence is Abhydrolase domain-containing protein C22H12.03 (270 aa).

The AB hydrolase-1 domain maps to 21 to 257; that stretch reads PPVLIFHGLL…CGHWVHFEKP (237 aa). Catalysis depends on charge relay system residues serine 95, glutamate 190, and histidine 250.

The protein belongs to the AB hydrolase superfamily.

The protein resides in the mitochondrion. This is Abhydrolase domain-containing protein C22H12.03 from Schizosaccharomyces pombe (strain 972 / ATCC 24843) (Fission yeast).